The primary structure comprises 233 residues: Leucyl/phenylalanyl-tRNA--protein transferase (233 aa).

It belongs to the L/F-transferase family.

It localises to the cytoplasm. It carries out the reaction N-terminal L-lysyl-[protein] + L-leucyl-tRNA(Leu) = N-terminal L-leucyl-L-lysyl-[protein] + tRNA(Leu) + H(+). It catalyses the reaction N-terminal L-arginyl-[protein] + L-leucyl-tRNA(Leu) = N-terminal L-leucyl-L-arginyl-[protein] + tRNA(Leu) + H(+). The catalysed reaction is L-phenylalanyl-tRNA(Phe) + an N-terminal L-alpha-aminoacyl-[protein] = an N-terminal L-phenylalanyl-L-alpha-aminoacyl-[protein] + tRNA(Phe). Functions in the N-end rule pathway of protein degradation where it conjugates Leu, Phe and, less efficiently, Met from aminoacyl-tRNAs to the N-termini of proteins containing an N-terminal arginine or lysine. This is Leucyl/phenylalanyl-tRNA--protein transferase from Laribacter hongkongensis (strain HLHK9).